The chain runs to 161 residues: Peroxynitrite isomerase 2 (161 aa).

The short motif at 17–23 (GTWTGRG) is the GXWXGXG element. H152 provides a ligand contact to heme b.

This sequence belongs to the nitrobindin family. In terms of assembly, homodimer. It depends on heme b as a cofactor.

It carries out the reaction peroxynitrite = nitrate. It participates in nitrogen metabolism. Its function is as follows. Heme-binding protein able to scavenge peroxynitrite and to protect free L-tyrosine against peroxynitrite-mediated nitration, by acting as a peroxynitrite isomerase that converts peroxynitrite to nitrate. Therefore, this protein likely plays a role in peroxynitrite sensing and in the detoxification of reactive nitrogen and oxygen species (RNS and ROS, respectively). Is able to bind nitric oxide (NO) in vitro, but may act as a sensor of peroxynitrite levels in vivo. The polypeptide is Peroxynitrite isomerase 2 (Mycobacterium avium (strain 104)).